A 144-amino-acid chain; its full sequence is DNA polymerase III subunit chi (144 aa).

Belongs to the DNA polymerase III chi/HolC chain family. As to quaternary structure, DNA polymerase III contains a core (composed of alpha, epsilon and theta chains) that associates with a tau subunit. This core dimerizes to form the POLIII' complex. PolIII' associates with the gamma complex (composed of gamma, delta, delta', psi and chi chains) and with the beta chain to form the complete DNA polymerase III complex. Interacts directly with the psi subunit (holD). The only subunit of the DNA polymerase III holoenzyme known to interact with single-stranded DNA binding protein (SSB), interacts directly with DNA helicase YoaA.

It carries out the reaction DNA(n) + a 2'-deoxyribonucleoside 5'-triphosphate = DNA(n+1) + diphosphate. In terms of biological role, part of the beta sliding clamp loading complex, which hydrolyzes ATP to load the beta clamp onto primed DNA to form the DNA replication pre-initiation complex. DNA polymerase III is a complex, multichain enzyme responsible for most of the replicative synthesis in bacteria. This DNA polymerase also exhibits 3' to 5' exonuclease activity. This subunit may stabilize YoaA and/or stimulate the helicase activity of YoaA. The protein is DNA polymerase III subunit chi (holC) of Haemophilus influenzae (strain ATCC 51907 / DSM 11121 / KW20 / Rd).